A 1159-amino-acid polypeptide reads, in one-letter code: Syntaxin-binding protein 5-like (1159 aa).

The disordered stretch occupies residues Met1–Thr37. Positions Cys25–Thr37 are enriched in low complexity. 10 WD repeats span residues Thr67–Gln108, Val115–Phe154, Ile159–Ile195, His214–Ile248, Ile254–Pro286, Pro307–Thr350, Ile358–Leu392, Thr414–Lys491, Gln519–Val628, and Thr642–Gly703. 2 disordered regions span residues Ser571–Asp604 and Leu690–Ser770. 2 stretches are compositionally biased toward polar residues: residues Gln699–Ser713 and Ser721–Cys739. 4 WD repeats span residues Val808 to Val865, Arg874 to Leu946, Ile951 to Ser995, and Cys1009 to Gln1032. Residues Gly1094–Lys1154 enclose the v-SNARE coiled-coil homology domain.

It belongs to the WD repeat L(2)GL family.

It localises to the cytoplasm. The protein resides in the cell membrane. Its subcellular location is the membrane. Functionally, may play a role in vesicle trafficking and exocytosis. The sequence is that of Syntaxin-binding protein 5-like (stxbp5l) from Danio rerio (Zebrafish).